The sequence spans 658 residues: MMPRLLLRDWPRCPSLVLGAPSRPLSAVSGPAEYLQHSIVPTMHYQDSLPRLPIPKLEDTMKRYLSAQKPLLNDSQFRKTEVLCKDFENGIGKELHAHLLAQDKQNKHTSYISGPWFDMYLTARDSVVLNFNPFMAFNPDPKSEYNDQLTRATNLTVSAVRFLKTLRAGLLEPEVFHLNPARSDTDAFKRLIRFVPSSLSWYGAYLVNAYPLDMSQYFRLFNSTRIPKPSRDELFTDTKARHLLVLRKGHFYVFDVLDQDGNIVNPSEIQAHLKYILSDSSPVPEFPLAYLTSENRDVWAELRQKLIHGGNEETLRKVDSAVFCLCLDDFPMKDLVHLSHTMLHGDGTNRWFDKSFNLIVAKDGTAAVHFEHAWGDGVAVLRFFNEVFRDSTQTPAIAPQSQPAATDSSVSVQKLSFKLSSALKAGVTAAKEKFDATMKTLTIDAIQFQRGGKEFLKKKKLSPDAVAQLAFQMAFLRQYGQTVATYESCSTAAFKHGRTETIRPASIFTKRCSEAFVREPSKHSVGELQHMMAECSKYHGQLTKEAAMGQGFDRHLFALRYLAAARGVTLPELYQDPAYQRINHNILSTSTLSSPAVSLGGFAPVVPDGFGIAYAVHDDWIGCNVSSYSGRNAREFLHCVQKCLEDMFDALEGKAIKT.

The N-terminal 25 residues, 1–25, are a transit peptide targeting the mitochondrion; it reads MMPRLLLRDWPRCPSLVLGAPSRPL. Residues 26–178 lie on the Mitochondrial matrix side of the membrane; the sequence is SAVSGPAEYL…GLLEPEVFHL (153 aa). N6-succinyllysine is present on K69. K79 bears the N6-acetyllysine mark. K85 is modified (N6-succinyllysine). Residues 179–208 constitute an intramembrane region (note=Mitochondrial inner membrane); it reads NPARSDTDAFKRLIRFVPSSLSWYGAYLVN. Over 209–658 the chain is Mitochondrial matrix; sequence AYPLDMSQYF…DALEGKAIKT (450 aa). An N6-acetyllysine; alternate modification is found at K239. Residue K239 is modified to N6-succinyllysine; alternate. K305 carries the N6-acetyllysine modification. The Proton acceptor role is filled by H372. Residue K418 is modified to N6-acetyllysine; alternate. N6-succinyllysine; alternate is present on K418. N6-succinyllysine occurs at positions 424 and 439. Residue 452–464 participates in CoA binding; it reads GKEFLKKKKLSPD. 3 residues coordinate (R)-carnitine: Y486, S488, and T499. K510 and K544 each carry N6-acetyllysine; alternate. Residues K510 and K544 each carry the N6-succinyllysine; alternate modification.

It belongs to the carnitine/choline acetyltransferase family.

It localises to the mitochondrion inner membrane. The catalysed reaction is (R)-carnitine + hexadecanoyl-CoA = O-hexadecanoyl-(R)-carnitine + CoA. It carries out the reaction octanoyl-CoA + (R)-carnitine = O-octanoyl-(R)-carnitine + CoA. It catalyses the reaction decanoyl-CoA + (R)-carnitine = O-decanoyl-(R)-carnitine + CoA. The enzyme catalyses dodecanoyl-CoA + (R)-carnitine = O-dodecanoyl-R-carnitine + CoA. The catalysed reaction is tetradecanoyl-CoA + (R)-carnitine = O-tetradecanoyl-(R)-carnitine + CoA. It carries out the reaction (R)-carnitine + octadecanoyl-CoA = O-octadecanoyl-(R)-carnitine + CoA. It catalyses the reaction eicosanoyl-CoA + (R)-carnitine = O-eicosanoyl-(R)-carnitine + CoA. The enzyme catalyses (9Z)-tetradecenoyl-CoA + (R)-carnitine = O-(9Z)-tetradecenoyl-(R)-carnitine + CoA. The catalysed reaction is (5Z)-tetradecenoyl-CoA + (R)-carnitine = O-(5Z)-tetradecenoyl-(R)-carnitine + CoA. It carries out the reaction (R)-carnitine + (9Z)-octadecenoyl-CoA = O-(9Z)-octadecenoyl-(R)-carnitine + CoA. It catalyses the reaction 4,8-dimethylnonanoyl-CoA + (R)-carnitine = O-4,8-dimethylnonanoyl-(R)-carnitine + CoA. The protein operates within lipid metabolism; fatty acid beta-oxidation. Involved in the intramitochondrial synthesis of acylcarnitines from accumulated acyl-CoA metabolites. Reconverts acylcarnitines back into the respective acyl-CoA esters that can then undergo beta-oxidation, an essential step for the mitochondrial uptake of long-chain fatty acids and their subsequent beta-oxidation in the mitochondrion. Active with medium (C8-C12) and long-chain (C14-C18) acyl-CoA esters. The polypeptide is Carnitine O-palmitoyltransferase 2, mitochondrial (Mus musculus (Mouse)).